We begin with the raw amino-acid sequence, 252 residues long: Oncostatin-M (252 aa).

An N-terminal signal peptide occupies residues 1 to 25; that stretch reads MGVLLTQRTLLSLVLALLFPSMASM. 2 disulfides stabilise this stretch: Cys-31–Cys-152 and Cys-74–Cys-192. The N-linked (GlcNAc...) asparagine glycan is linked to Asn-100. Disordered stretches follow at residues 162 to 184 and 213 to 252; these read TAEP…ASDA and GESP…QLPR. Asn-217 carries an N-linked (GlcNAc...) asparagine glycan. A compositionally biased stretch (basic residues) spans 218 to 245; sequence RSRRHSPHQALRKGVRRTRPSRKGKRLM. Positions 222 to 252 are excised as a propeptide; sequence HSPHQALRKGVRRTRPSRKGKRLMTRGQLPR.

Belongs to the LIF/OSM family. Propeptide processing is not important for receptor binding activity but may be important growth-inhibitory activity.

Its subcellular location is the secreted. Growth regulator. Inhibits the proliferation of a number of tumor cell lines. Stimulates proliferation of AIDS-KS cells. It regulates cytokine production, including IL-6, G-CSF and GM-CSF from endothelial cells. Uses both type I OSM receptor (heterodimers composed of LIFR and IL6ST) and type II OSM receptor (heterodimers composed of OSMR and IL6ST). Involved in the maturation of fetal hepatocytes, thereby promoting liver development and regeneration. In Homo sapiens (Human), this protein is Oncostatin-M (OSM).